Here is a 92-residue protein sequence, read N- to C-terminus: C-C motif chemokine 4 (92 aa).

An N-terminal signal peptide occupies residues 1 to 23 (MKLCVSAFSLLLLVAAFCDSVLS). Disulfide bonds link Cys34-Cys58 and Cys35-Cys74.

This sequence belongs to the intercrine beta (chemokine CC) family. In terms of assembly, homodimer.

It is found in the secreted. Functionally, monokine with inflammatory and chemokinetic properties. In Rattus norvegicus (Rat), this protein is C-C motif chemokine 4 (Ccl4).